The primary structure comprises 334 residues: Probable tRNA pseudouridine synthase B (334 aa).

D82 serves as the catalytic Nucleophile. Residues 250 to 325 (LPKVWIRDSA…IAVDVDKVFM (76 aa)) enclose the PUA domain.

It belongs to the pseudouridine synthase TruB family. Type 2 subfamily.

It catalyses the reaction uridine(55) in tRNA = pseudouridine(55) in tRNA. In terms of biological role, could be responsible for synthesis of pseudouridine from uracil-55 in the psi GC loop of transfer RNAs. This is Probable tRNA pseudouridine synthase B from Thermococcus gammatolerans (strain DSM 15229 / JCM 11827 / EJ3).